Consider the following 577-residue polypeptide: Copine-8 (577 aa).

C2 domains lie at Thr-19–Lys-146 and Lys-155–Tyr-278. Ca(2+) contacts are provided by Asp-52, Asp-58, Asp-112, Asp-114, Ser-117, Lys-122, Asp-124, Asp-186, Asp-192, Asp-248, Asp-250, and Asp-256. Ser-273 bears the Phosphoserine mark. One can recognise a VWFA domain in the interval Asn-322–Ile-523.

It belongs to the copine family. Requires Ca(2+) as cofactor.

Its function is as follows. Probable calcium-dependent phospholipid-binding protein that may play a role in calcium-mediated intracellular processes. This chain is Copine-8, found in Mus musculus (Mouse).